A 779-amino-acid chain; its full sequence is Glucan endo-1,3-beta-D-glucosidase 2 (779 aa).

The interval 1 to 71 (MCYSRQAIPP…SNPLADSQVN (71 aa)) is disordered. A compositionally biased stretch (polar residues) spans 57-71 (RTPSSSNPLADSQVN). A beta-sandwich subdomain region spans residues 73 to 309 (DNIFQSPVLS…NGLICQLSAD (237 aa)). The region spanning 73-779 (DNIFQSPVLS…WSLAYSGAFS (707 aa)) is the GH81 domain. The segment at 309 to 400 (DSVPSIDMAA…LTNSFDMQVQ (92 aa)) is alpha/beta subdomain. A sufficient for catalytic activity region spans residues 375–779 (IASSLDSTVK…WSLAYSGAFS (405 aa)). The interval 415–779 (NKKADYSQEK…WSLAYSGAFS (365 aa)) is (alpha/beta)6 barrel subdomain. Residue aspartate 526 is part of the active site. Residues histidine 530, aspartate 607, glutamate 609, and glutamate 613 each contribute to the (1,3-beta-D-glucosyl)n site. Active-site residues include glutamate 609 and glutamate 613. The tract at residues 678 to 680 (KID) is may provide specificity for triple-helical beta-glucan. Tyrosine 691 serves as a coordination point for (1,3-beta-D-glucosyl)n.

Belongs to the glycosyl hydrolase 81 family.

It localises to the cytoplasm. It carries out the reaction Hydrolysis of (1-&gt;3)-beta-D-glucosidic linkages in (1-&gt;3)-beta-D-glucans.. With respect to regulation, inhibited by mercury ions. Functionally, cleaves internal linkages in 1,3-beta-glucan. The sequence is that of Glucan endo-1,3-beta-D-glucosidase 2 from Saccharomyces cerevisiae (strain ATCC 204508 / S288c) (Baker's yeast).